Consider the following 286-residue polypeptide: Acyl-CoA-binding domain-containing protein 6 (286 aa).

One can recognise an ACB domain in the interval 32–117; that stretch reads LQCQFEQAAK…VKKLDPDWSP (86 aa). An acyl-CoA-binding positions include 59–63, Lys85, and Tyr104; that span reads YARYK. 2 ANK repeats span residues 182 to 211 and 215 to 244; these read EGRSLLHWACDRGHTQLVSVILFHNAHINM and EGQTPLHYASACEFPDIVDLLLDHGADPSL.

Its subcellular location is the cytoplasm. The protein resides in the nucleus. In terms of biological role, binds long-chain acyl-coenzyme A molecules with a strong preference for unsaturated C18:1-CoA. Does not bind fatty acids. Plays a role in protein N-myristoylation. The protein is Acyl-CoA-binding domain-containing protein 6 (acbd6) of Xenopus laevis (African clawed frog).